Consider the following 271-residue polypeptide: Chitinase 6 (271 aa).

An N-terminal signal peptide occupies residues M1–A20. The Chitin-binding type-1 domain occupies A25 to V60. 6 disulfides stabilise this stretch: C28/C36, C30/C42, C35/C49, C88/C137, C150/C159, and C239/C271. The Proton donor role is filled by E132. N268 carries N-linked (GlcNAc...) asparagine glycosylation.

The protein belongs to the glycosyl hydrolase 19 family. Chitinase class IV subfamily. As to expression, expressed in roots, leaves, sheaths and meristems.

The catalysed reaction is Random endo-hydrolysis of N-acetyl-beta-D-glucosaminide (1-&gt;4)-beta-linkages in chitin and chitodextrins.. Its function is as follows. May function in reproductive organs during embryogenesis and seed maturation. The protein is Chitinase 6 (Cht6) of Oryza sativa subsp. japonica (Rice).